A 147-amino-acid chain; its full sequence is Adenylylsulfatase HINT1 (147 aa).

Positions 37-147 (IFDKIISKEI…GGRQMNWPPG (111 aa)) constitute an HIT domain. The Histidine triad motif signature appears at 131–135 (HIHVH). His133 (tele-AMP-histidine intermediate) is an active-site residue. His135 lines the substrate pocket.

The protein localises to the peroxisome. Its subcellular location is the plastid. The protein resides in the chloroplast. It carries out the reaction adenosine 5'-phosphosulfate + H2O = sulfate + AMP + 2 H(+). In terms of biological role, possesses adenylylsulfatase activity in vitro. The protein is Adenylylsulfatase HINT1 of Arabidopsis thaliana (Mouse-ear cress).